The chain runs to 355 residues: Probable dual-specificity RNA methyltransferase RlmN (355 aa).

The active-site Proton acceptor is the Glu-89. Residues 95-322 enclose the Radical SAM core domain; the sequence is YENRKTVCLS…KRLGVPTSIR (228 aa). The cysteines at positions 102 and 333 are disulfide-linked. Positions 109, 113, and 116 each coordinate [4Fe-4S] cluster. S-adenosyl-L-methionine-binding positions include 159–160, Ser-191, 214–216, and Asn-290; these read GE and SLH. The active-site S-methylcysteine intermediate is the Cys-333.

It belongs to the radical SAM superfamily. RlmN family. [4Fe-4S] cluster serves as cofactor.

It localises to the cytoplasm. The enzyme catalyses adenosine(2503) in 23S rRNA + 2 reduced [2Fe-2S]-[ferredoxin] + 2 S-adenosyl-L-methionine = 2-methyladenosine(2503) in 23S rRNA + 5'-deoxyadenosine + L-methionine + 2 oxidized [2Fe-2S]-[ferredoxin] + S-adenosyl-L-homocysteine. The catalysed reaction is adenosine(37) in tRNA + 2 reduced [2Fe-2S]-[ferredoxin] + 2 S-adenosyl-L-methionine = 2-methyladenosine(37) in tRNA + 5'-deoxyadenosine + L-methionine + 2 oxidized [2Fe-2S]-[ferredoxin] + S-adenosyl-L-homocysteine. In terms of biological role, specifically methylates position 2 of adenine 2503 in 23S rRNA and position 2 of adenine 37 in tRNAs. In Thermus thermophilus (strain ATCC BAA-163 / DSM 7039 / HB27), this protein is Probable dual-specificity RNA methyltransferase RlmN.